Here is a 454-residue protein sequence, read N- to C-terminus: Glutamyl-tRNA reductase (454 aa).

Substrate-binding positions include 49 to 52 (TCNR), Ser-109, 114 to 116 (ETQ), and Gln-120. Catalysis depends on Cys-50, which acts as the Nucleophile. An NADP(+)-binding site is contributed by 189–194 (GAGKMS). A compositionally biased stretch (basic and acidic residues) spans 432–442 (DHAEQSWKEGQ). The disordered stretch occupies residues 432-454 (DHAEQSWKEGQRPSLNQGMALRT).

Belongs to the glutamyl-tRNA reductase family. In terms of assembly, homodimer.

It carries out the reaction (S)-4-amino-5-oxopentanoate + tRNA(Glu) + NADP(+) = L-glutamyl-tRNA(Glu) + NADPH + H(+). Its pathway is porphyrin-containing compound metabolism; protoporphyrin-IX biosynthesis; 5-aminolevulinate from L-glutamyl-tRNA(Glu): step 1/2. Catalyzes the NADPH-dependent reduction of glutamyl-tRNA(Glu) to glutamate 1-semialdehyde (GSA). The sequence is that of Glutamyl-tRNA reductase from Shouchella clausii (strain KSM-K16) (Alkalihalobacillus clausii).